Consider the following 89-residue polypeptide: MVLDPTQKKSVIDAHAKHEGDTGSPEVQVALLTARIEDLTGHFKEHKKDFHSRTGLLKLVGRRRNILNYLKKTDVQRYRALIEKLGLRK.

The span at 1–21 (MVLDPTQKKSVIDAHAKHEGD) shows a compositional bias: basic and acidic residues. Residues 1–24 (MVLDPTQKKSVIDAHAKHEGDTGS) are disordered.

This sequence belongs to the universal ribosomal protein uS15 family. In terms of assembly, part of the 30S ribosomal subunit. Forms a bridge to the 50S subunit in the 70S ribosome, contacting the 23S rRNA.

Functionally, one of the primary rRNA binding proteins, it binds directly to 16S rRNA where it helps nucleate assembly of the platform of the 30S subunit by binding and bridging several RNA helices of the 16S rRNA. Its function is as follows. Forms an intersubunit bridge (bridge B4) with the 23S rRNA of the 50S subunit in the ribosome. The polypeptide is Small ribosomal subunit protein uS15 (Desulfovibrio desulfuricans (strain ATCC 27774 / DSM 6949 / MB)).